The primary structure comprises 140 residues: Anti-sigma F factor (140 aa).

Belongs to the anti-sigma-factor family.

The enzyme catalyses L-seryl-[protein] + ATP = O-phospho-L-seryl-[protein] + ADP + H(+). It carries out the reaction L-threonyl-[protein] + ATP = O-phospho-L-threonyl-[protein] + ADP + H(+). Binds to sigma F and blocks its ability to form an RNA polymerase holoenzyme (E-sigma F). Phosphorylates SpoIIAA on a serine residue. This phosphorylation may enable SpoIIAA to act as an anti-anti-sigma factor that counteracts SpoIIAB and thus releases sigma F from inhibition. This chain is Anti-sigma F factor, found in Clostridium perfringens (strain SM101 / Type A).